A 320-amino-acid chain; its full sequence is ATP-dependent 6-phosphofructokinase (320 aa).

Residue glycine 12 participates in ATP binding. ADP-binding positions include 22–26 (RGVVR) and 55–60 (RYSVSD). Residues 73–74 (RF) and 103–106 (GDGS) each bind ATP. Aspartate 104 is a Mg(2+) binding site. Residue 126-128 (TID) participates in substrate binding. Aspartate 128 functions as the Proton acceptor in the catalytic mechanism. Position 155 (arginine 155) interacts with ADP. Substrate contacts are provided by residues arginine 163 and 170-172 (MGR). Residues 186-188 (GCE), lysine 212, and 214-216 (KKH) each bind ADP. Substrate contacts are provided by residues glutamate 223, arginine 244, and 250-253 (HIQR).

Belongs to the phosphofructokinase type A (PFKA) family. ATP-dependent PFK group I subfamily. Prokaryotic clade 'B1' sub-subfamily. As to quaternary structure, homotetramer. It depends on Mg(2+) as a cofactor.

The protein localises to the cytoplasm. The enzyme catalyses beta-D-fructose 6-phosphate + ATP = beta-D-fructose 1,6-bisphosphate + ADP + H(+). It participates in carbohydrate degradation; glycolysis; D-glyceraldehyde 3-phosphate and glycerone phosphate from D-glucose: step 3/4. Allosterically activated by ADP and other diphosphonucleosides, and allosterically inhibited by phosphoenolpyruvate. Catalyzes the phosphorylation of D-fructose 6-phosphate to fructose 1,6-bisphosphate by ATP, the first committing step of glycolysis. The protein is ATP-dependent 6-phosphofructokinase of Erwinia tasmaniensis (strain DSM 17950 / CFBP 7177 / CIP 109463 / NCPPB 4357 / Et1/99).